We begin with the raw amino-acid sequence, 405 residues long: MLIVQKYGGTSMGSIERIHNVAQRVLESVTLGHQVVVVVSAMSGETDRLLEFGKNFSHNPNKREMDRIVSVGELVSSAALSMALERYGHRAISLSGKEAGILTSSHFQNAVIQSIDTKRITELLEKNYIVVIAGFQGADIQGETTTLGRGGSDLSAVALAGALKAHLCEIYTDVDGVYTTDPRIEEKAQKIAQISYDEMLELASMGAKVLLNRSVELAKKLSVKLVTRNSFNHSEGTLIVAEKDFKGERMETPIVSGIALDKNQARVSMEGVEDRPGIAAEIFGALAEYRINVDMIVQTIGRDGKTDLDFTIVKTQIEETKQALKPFLAQMDSIDYDENIAKVSIVGVGMKSHSGVASIAFKALAKDNINIMMISTSEIKISVLIDIKYAELAVRTLHAVYQLDQ.

ACT domains lie at 267–344 (VSME…AKVS) and 345–405 (IVGV…QLDQ).

This sequence belongs to the aspartokinase family.

The enzyme catalyses L-aspartate + ATP = 4-phospho-L-aspartate + ADP. It functions in the pathway amino-acid biosynthesis; L-lysine biosynthesis via DAP pathway; (S)-tetrahydrodipicolinate from L-aspartate: step 1/4. It participates in amino-acid biosynthesis; L-methionine biosynthesis via de novo pathway; L-homoserine from L-aspartate: step 1/3. Its pathway is amino-acid biosynthesis; L-threonine biosynthesis; L-threonine from L-aspartate: step 1/5. This chain is Aspartokinase (lysC), found in Helicobacter pylori (strain ATCC 700392 / 26695) (Campylobacter pylori).